Reading from the N-terminus, the 95-residue chain is Aspartyl/glutamyl-tRNA(Asn/Gln) amidotransferase subunit C (95 aa).

The protein belongs to the GatC family. In terms of assembly, heterotrimer of A, B and C subunits.

It catalyses the reaction L-glutamyl-tRNA(Gln) + L-glutamine + ATP + H2O = L-glutaminyl-tRNA(Gln) + L-glutamate + ADP + phosphate + H(+). The catalysed reaction is L-aspartyl-tRNA(Asn) + L-glutamine + ATP + H2O = L-asparaginyl-tRNA(Asn) + L-glutamate + ADP + phosphate + 2 H(+). In terms of biological role, allows the formation of correctly charged Asn-tRNA(Asn) or Gln-tRNA(Gln) through the transamidation of misacylated Asp-tRNA(Asn) or Glu-tRNA(Gln) in organisms which lack either or both of asparaginyl-tRNA or glutaminyl-tRNA synthetases. The reaction takes place in the presence of glutamine and ATP through an activated phospho-Asp-tRNA(Asn) or phospho-Glu-tRNA(Gln). In Xanthobacter autotrophicus (strain ATCC BAA-1158 / Py2), this protein is Aspartyl/glutamyl-tRNA(Asn/Gln) amidotransferase subunit C.